A 402-amino-acid chain; its full sequence is Putative RNA-guided DNA endonuclease (402 aa).

The active site involves Asp188. The interval 202-239 (KITNPKHERRDRARLAKAQRDVSRKAKGSANRKKARRK) is disordered. Residues 204-225 (TNPKHERRDRARLAKAQRDVSR) show a composition bias toward basic and acidic residues. Residues 226–239 (KAKGSANRKKARRK) are compositionally biased toward basic residues. Glu272 is a catalytic residue. Zn(2+) contacts are provided by Cys325, Cys328, Cys344, and Cys346. The active site involves Asp353. Residues 373–402 (GIRPQRESSRTGRSSVKQEPQRATAGIPRL) form a disordered region.

This sequence in the N-terminal section; belongs to the transposase 2 family. It in the C-terminal section; belongs to the transposase 35 family.

In terms of biological role, an RNA-guided dsDNA endonuclease. When guided by an RNA derived from the right-end element of its insertion sequence element (IS), cleaves DNA downstream of the transposon-associated motif (TAM). Cleaves supercoiled and linear DNA in a staggered manner 15-21 bases from the TAM yielding 5'-overhangs. Binds reRNA, an approximately 150 nucleotide base sRNA derived from the 3' end of its own gene, the right end (RE) of the insertion sequence (IS) plus sequence downstream of the IS. The chain is Putative RNA-guided DNA endonuclease from Streptomyces pristinaespiralis.